Reading from the N-terminus, the 579-residue chain is Mitochondrial distribution and morphology protein 36 (579 aa).

The disordered stretch occupies residues 1 to 27 (MDENGTVKPGYELKGLNSGNSRSNMDK). Phosphoserine is present on serine 42. Disordered stretches follow at residues 378–401 (TPINSSDSDNLSNGEIDRLDGRRL) and 446–518 (DNKH…ESQS). Residues 379–390 (PINSSDSDNLSN) are compositionally biased toward polar residues. Residues 446 to 463 (DNKHSTKDTDSNIRRNEH) are compositionally biased toward basic and acidic residues. The span at 495 to 518 (PSQSSSRMSTLPLSPSSSLLESQS) shows a compositional bias: low complexity.

Its function is as follows. Involved in mitochondrial distribution and morphology. The protein is Mitochondrial distribution and morphology protein 36 (MDM36) of Saccharomyces cerevisiae (strain ATCC 204508 / S288c) (Baker's yeast).